We begin with the raw amino-acid sequence, 175 residues long: Cytochrome c homolog (175 aa).

Over 1–8 (MSGKELNK) the chain is Cytoplasmic. The chain crosses the membrane as a helical; Signal-anchor span at residues 9–29 (IVAAILFASLIAMMVGFVANI). The Periplasmic portion of the chain corresponds to 30-175 (LYKPTLELQH…LFLKTYVHDK (146 aa)). Residues cysteine 84, cysteine 87, histidine 88, and methionine 150 each coordinate heme c.

Belongs to the cytochrome c family. Binds 1 heme c group covalently per subunit.

It is found in the cell membrane. Its function is as follows. May be involved in electron transfer from bc1 complex to aa3. The polypeptide is Cytochrome c homolog (cycM) (Rickettsia felis (strain ATCC VR-1525 / URRWXCal2) (Rickettsia azadi)).